The sequence spans 320 residues: ATP-dependent 6-phosphofructokinase (320 aa).

Residues Gly-12, 73-74, and 103-106 each bind ATP; these read RF and GDGS. Asp-104 contacts Mg(2+). 126–128 is a binding site for substrate; it reads TID. Asp-128 (proton acceptor) is an active-site residue. Position 155 (Arg-155) interacts with ADP. Substrate-binding positions include Arg-163 and 170–172; that span reads MGR. Residues 186–188 and Lys-212 each bind ADP; that span reads GCE. Substrate contacts are provided by residues Glu-223, Arg-244, and 250-253; that span reads HIQR.

It belongs to the phosphofructokinase type A (PFKA) family. ATP-dependent PFK group I subfamily. Prokaryotic clade 'B1' sub-subfamily. As to quaternary structure, homotetramer. Mg(2+) serves as cofactor.

The protein localises to the cytoplasm. It catalyses the reaction beta-D-fructose 6-phosphate + ATP = beta-D-fructose 1,6-bisphosphate + ADP + H(+). The protein operates within carbohydrate degradation; glycolysis; D-glyceraldehyde 3-phosphate and glycerone phosphate from D-glucose: step 3/4. Allosterically activated by ADP and other diphosphonucleosides, and allosterically inhibited by phosphoenolpyruvate. In terms of biological role, catalyzes the phosphorylation of D-fructose 6-phosphate to fructose 1,6-bisphosphate by ATP, the first committing step of glycolysis. In Buchnera aphidicola subsp. Cinara cedri (strain Cc), this protein is ATP-dependent 6-phosphofructokinase.